We begin with the raw amino-acid sequence, 199 residues long: Recombination protein RecR (199 aa).

The C4-type zinc-finger motif lies at 58 to 73 (CSVCYNLSETELCRIC). In terms of domain architecture, Toprim spans 81–176 (TRLCVVEQPR…EITRLARGIT (96 aa)).

Belongs to the RecR family.

Functionally, may play a role in DNA repair. It seems to be involved in an RecBC-independent recombinational process of DNA repair. It may act with RecF and RecO. The polypeptide is Recombination protein RecR (Rhodopirellula baltica (strain DSM 10527 / NCIMB 13988 / SH1)).